Reading from the N-terminus, the 300-residue chain is MQSTLSQSPGSRFSQYMALTKPRVTQLAVFCAVIGMFLATPGMVPWHVLIGGTIGIWLLAGAAFAINCLVEQKIDAMMRRTAWRPSARGEITTPQILLFSAVLGSAGAWTLYTFTNPLTMWLTIATFVGYAVVYTLLLKPMTPQNIVIGGASGAMPPALGWAAVTGAVPGDAWILVLIIFVWTPPHFWVLALYRRKDYENAGLPMLPVTHGEKFTRLHILLYTVILFAVTLMPFISGMSGVVYLASAVLLGAVFLAYAWKIYRDYSDELARKAFRYSIVYLSLLFAALLVDHYARPLLGV.

8 helical membrane-spanning segments follow: residues 24 to 44 (VTQL…PGMV), 46 to 66 (WHVL…AFAI), 94 to 114 (PQIL…LYTF), 118 to 138 (LTMW…TLLL), 146 to 166 (IVIG…AVTG), 172 to 192 (AWIL…VLAL), 224 to 244 (VILF…VVYL), and 278 to 298 (IVYL…RPLL).

Belongs to the UbiA prenyltransferase family. Protoheme IX farnesyltransferase subfamily.

It is found in the cell inner membrane. It catalyses the reaction heme b + (2E,6E)-farnesyl diphosphate + H2O = Fe(II)-heme o + diphosphate. It functions in the pathway porphyrin-containing compound metabolism; heme O biosynthesis; heme O from protoheme: step 1/1. Functionally, converts heme B (protoheme IX) to heme O by substitution of the vinyl group on carbon 2 of heme B porphyrin ring with a hydroxyethyl farnesyl side group. The polypeptide is Protoheme IX farnesyltransferase (Burkholderia ambifaria (strain MC40-6)).